Consider the following 339-residue polypeptide: MIDDRKLQILRAIIQDYISTGEPVGSRTIAKKYNLGVSSATIRNEMADLEDMGFLEQPHTSAGRIPSSRGYRLYVDRMIEFERLSSEEEGLIRSSIIDGTLYEVDKIIKQTSALLSELTKMTCIVKAPSVHKSFVKSIQLLKVDDVSILCVLVTDNGVIRNTVIKVKSVPISEELIKISKIITERLKNLTIEQINLEVISNLNRALSGYEDIVNAVLPALYESLKGDETSEVFLEGTINIFNYPEYNNIHKAKEILELLHDKKSISELISDSDDMTVKIGDEIFVPEAKECSIISAGYHVGDRSLGTIALIGPRRINYSKVLSIMTEVMKELNETLKNK.

It belongs to the HrcA family.

Functionally, negative regulator of class I heat shock genes (grpE-dnaK-dnaJ and groELS operons). Prevents heat-shock induction of these operons. This chain is Heat-inducible transcription repressor HrcA, found in Clostridium perfringens (strain ATCC 13124 / DSM 756 / JCM 1290 / NCIMB 6125 / NCTC 8237 / Type A).